The following is a 281-amino-acid chain: Lectin (281 aa).

Positions 1–26 (MATYKLCSVLALSLTLFLLILNKVNS) are cleaved as a signal peptide. Asn-43 and Asn-139 each carry an N-linked (GlcNAc...) asparagine glycan. A propeptide spanning residues 269 to 281 (AVIPTSNHNTFAI) is cleaved from the precursor.

Belongs to the leguminous lectin family. As to quaternary structure, homodimer. Post-translationally, a minor C-terminal proteolytic processing site is observed at position 268.

In terms of biological role, galactose and N-acetyllactosamine specific lectin. Binds to the H-2 blood type determinant fucosyl-N-acetyllactosamine. In Erythrina corallodendron (Coral tree), this protein is Lectin.